A 796-amino-acid polypeptide reads, in one-letter code: Protocadherin beta-3 (796 aa).

An N-terminal signal peptide occupies residues 1 to 26 (MEAGGERFLRQRQVLLLFVFLGGSLA). Residues 27 to 690 (GSESRRYSVA…AQADLLTVYL (664 aa)) are Extracellular-facing. Cadherin domains lie at 35-133 (VAEE…SPVF), 138-242 (MHLK…APEF), 247-347 (YEVA…PPEL), 352-451 (VNSP…APAF), and 456-561 (YTLF…SPFV). The N-linked (GlcNAc...) asparagine glycan is linked to Asn-169. N-linked (GlcNAc...) asparagine glycosylation is found at Asn-418 and Asn-436. N-linked (GlcNAc...) asparagine glycosylation occurs at Asn-567. One can recognise a Cadherin 6 domain in the interval 568 to 671 (GSAPCTELVP…LVDGFSQPYL (104 aa)). Residues 691–711 (VVALASVSSLFLFSVLLFVAV) traverse the membrane as a helical segment. The Cytoplasmic segment spans residues 712-796 (RLCRRSRAAS…PSFRKSFEFS (85 aa)).

The protein resides in the cell membrane. Functionally, potential calcium-dependent cell-adhesion protein. May be involved in the establishment and maintenance of specific neuronal connections in the brain. This chain is Protocadherin beta-3 (PCDHB3), found in Pan troglodytes (Chimpanzee).